The following is a 705-amino-acid chain: Polyribonucleotide nucleotidyltransferase (705 aa).

Asp486 and Asp492 together coordinate Mg(2+). The region spanning 553-612 (PRIYKIKINPEKIKDVIGKGGSVIRMLTEKTKSSIEIEDDGTVKVISTDIKNAQCALKKI) is the KH domain. The S1 motif domain occupies 622 to 690 (NKIYVAKITR…RYGRIRLSFT (69 aa)).

It belongs to the polyribonucleotide nucleotidyltransferase family. In terms of assembly, component of the RNA degradosome, which is a multiprotein complex involved in RNA processing and mRNA degradation. Mg(2+) serves as cofactor.

The protein localises to the cytoplasm. The enzyme catalyses RNA(n+1) + phosphate = RNA(n) + a ribonucleoside 5'-diphosphate. In terms of biological role, involved in mRNA degradation. Catalyzes the phosphorolysis of single-stranded polyribonucleotides processively in the 3'- to 5'-direction. This Wigglesworthia glossinidia brevipalpis protein is Polyribonucleotide nucleotidyltransferase.